The sequence spans 932 residues: RNA-binding protein 12 (932 aa).

Residues 97 to 116 (IPPANASRSGPPPSSGMSGR) are disordered. Residues 98 to 116 (PPANASRSGPPPSSGMSGR) show a composition bias toward low complexity. The RRM 1 domain occupies 304 to 379 (LYVSVHGMPF…RYVEVSPATE (76 aa)). Phosphoserine occurs at positions 352 and 375. A disordered region spans residues 393-424 (QNMGPSGQSHPPPQTLPRSKSPSGQKRSRSRS). The segment covering 408–417 (LPRSKSPSGQ) has biased composition (polar residues). Phosphoserine is present on residues serine 420, serine 422, and serine 424. Residues 430–507 (FCVYLKGLPF…RFIQVHPITK (78 aa)) enclose the RRM 2 domain. Position 525 is a phosphoserine (serine 525). Residues 717–734 (NGPPFNFPGNFGGSNAFG) show a composition bias toward low complexity. The tract at residues 717–853 (NGPPFNFPGN…PGFASSSGKP (137 aa)) is disordered. Gly residues predominate over residues 783 to 811 (SGFGGGPQNFGNGPGSLGGPPGFGSGPPG). Pro residues predominate over residues 824–836 (AFGPGPGPGPGPG). Residues 856–932 (TVIKVQNMPF…GSRKVKLVLG (77 aa)) form the RRM 3 domain.

The protein resides in the nucleus. This Macaca mulatta (Rhesus macaque) protein is RNA-binding protein 12 (RBM12).